The following is a 421-amino-acid chain: Solute carrier family 35 member F3 (421 aa).

Positions 25 to 45 (EGEERPRDSPGPAEAQAPAGV) are disordered. A run of 10 helical transmembrane segments spans residues 66 to 86 (IFWGVAVVLCVCSSWAGSTQL), 98 to 118 (FTLTWFATNWNFLFFPLYYVG), 149 to 169 (VFFTKAAPFGVLWTLTNYLYL), 179 to 199 (DVSVLFCCNKAFVFLLSWIVL), 208 to 228 (IVAAILAIAGIVMMTYADGFH), 232 to 252 (VIGIALVVASASMSALYKVLF), 266 to 286 (LFLSILGVFNILFITCIPIIL), 305 to 325 (LCGFSVLLLTFNIVLNFGIAV), 326 to 346 (TYPTLMSLGIVLSIPVNAVID), and 352 to 372 (IVFNGVRVIAIIIIGLGFLLL). Residues 393–421 (KKEEPAEGAADLSSGPQSKNRRARPSFAR) are disordered. A compositionally biased stretch (basic residues) spans 411 to 421 (KNRRARPSFAR).

Belongs to the SLC35F solute transporter family. As to expression, expressed at the highest levels in the adult cerebellum.

It is found in the membrane. The enzyme catalyses thiamine(in) = thiamine(out). Mediates thiamine transport. The polypeptide is Solute carrier family 35 member F3 (Homo sapiens (Human)).